Reading from the N-terminus, the 290-residue chain is Protein-glutamine deamidase Cif (290 aa).

The segment at 1–26 (MKISPNTISPSQSDPRMSTNVSQRSR) is disordered. Residues Cys-117, His-173, and Gln-193 contribute to the active site.

The protein belongs to the Cif family.

The protein resides in the secreted. Its subcellular location is the host nucleus. It carries out the reaction L-glutaminyl-[protein] + H2O = L-glutamyl-[protein] + NH4(+). Functionally, protein-glutamine deamidase effector that inhibits the host cell cycle and other key cellular processes such as the actin network and programmed-cell death. Acts by mediating the side chain deamidation of 'Gln-40' of host NEDD8, converting it to glutamate, thereby abolishing the activity of cullin-RING-based E3 ubiquitin-protein ligase complexes (CRL complexes). Inactivation of CRL complexes prevents ubiquitination and subsequent degradation of the cyclin-dependent kinase inhibitors CDKN1A/p21 and CDKN1B/p27, leading to G1 and G2 cell cycle arrests in host cells. Also able to catalyze deamidation of 'Gln-40' of host ubiquitin in vitro; however, NEDD8 constitutes the preferred substrate in vivo. The protein is Protein-glutamine deamidase Cif of Yersinia pseudotuberculosis serotype O:3 (strain YPIII).